Reading from the N-terminus, the 300-residue chain is Protoheme IX farnesyltransferase (300 aa).

A run of 9 helical transmembrane segments spans residues 24–44 (VTQL…PGMV), 48–68 (VLLG…AINC), 94–114 (LQIL…LYTF), 118–138 (LTIW…TLLL), 146–166 (IVIG…AVTG), 172–192 (AWIL…VLAL), 217–237 (LHIL…FISG), 239–259 (SGAV…AYAW), and 278–298 (IVYL…RPVI).

The protein belongs to the UbiA prenyltransferase family. Protoheme IX farnesyltransferase subfamily.

The protein localises to the cell inner membrane. It carries out the reaction heme b + (2E,6E)-farnesyl diphosphate + H2O = Fe(II)-heme o + diphosphate. Its pathway is porphyrin-containing compound metabolism; heme O biosynthesis; heme O from protoheme: step 1/1. Converts heme B (protoheme IX) to heme O by substitution of the vinyl group on carbon 2 of heme B porphyrin ring with a hydroxyethyl farnesyl side group. The polypeptide is Protoheme IX farnesyltransferase (Burkholderia mallei (strain NCTC 10247)).